The chain runs to 602 residues: Aspartate--tRNA(Asp/Asn) ligase (602 aa).

Position 191 (Glu-191) interacts with L-aspartate. The aspartate stretch occupies residues 215-218 (QLYK). Arg-237 contacts L-aspartate. Residues 237-239 (RDE) and Gln-246 each bind ATP. His-465 contacts L-aspartate. Glu-499 lines the ATP pocket. Arg-506 serves as a coordination point for L-aspartate. 551-554 (GLDR) contacts ATP.

It belongs to the class-II aminoacyl-tRNA synthetase family. Type 1 subfamily. As to quaternary structure, homodimer.

The protein resides in the cytoplasm. It catalyses the reaction tRNA(Asx) + L-aspartate + ATP = L-aspartyl-tRNA(Asx) + AMP + diphosphate. Functionally, aspartyl-tRNA synthetase with relaxed tRNA specificity since it is able to aspartylate not only its cognate tRNA(Asp) but also tRNA(Asn). Reaction proceeds in two steps: L-aspartate is first activated by ATP to form Asp-AMP and then transferred to the acceptor end of tRNA(Asp/Asn). The chain is Aspartate--tRNA(Asp/Asn) ligase from Treponema pallidum (strain Nichols).